A 157-amino-acid polypeptide reads, in one-letter code: Large ribosomal subunit protein uL22 (157 aa).

Belongs to the universal ribosomal protein uL22 family. As to quaternary structure, part of the 50S ribosomal subunit.

This protein binds specifically to 23S rRNA. It makes multiple contacts with different domains of the 23S rRNA in the assembled 50S subunit and ribosome. Its function is as follows. The globular domain of the protein is located near the polypeptide exit tunnel on the outside of the subunit, while an extended beta-hairpin is found that lines the wall of the exit tunnel in the center of the 70S ribosome. The sequence is that of Large ribosomal subunit protein uL22 from Staphylothermus marinus (strain ATCC 43588 / DSM 3639 / JCM 9404 / F1).